Consider the following 476-residue polypeptide: Trigger factor (476 aa).

The 86-residue stretch at 169-254 (GDKVTLDYVG…VKEVAAAEEL (86 aa)) folds into the PPIase FKBP-type domain. The tract at residues 437-476 (SRDELLAEDEAEGEEKKAAGETKKKAAPKKKAAKKESAAE) is disordered. Positions 450-460 (EEKKAAGETKK) are enriched in basic and acidic residues.

This sequence belongs to the FKBP-type PPIase family. Tig subfamily.

The protein localises to the cytoplasm. The enzyme catalyses [protein]-peptidylproline (omega=180) = [protein]-peptidylproline (omega=0). Functionally, involved in protein export. Acts as a chaperone by maintaining the newly synthesized protein in an open conformation. Functions as a peptidyl-prolyl cis-trans isomerase. This Chelativorans sp. (strain BNC1) protein is Trigger factor.